We begin with the raw amino-acid sequence, 284 residues long: Four and a half LIM domains protein 5 (284 aa).

Residues cysteine 8–cysteine 32 form a C4-type zinc finger. LIM zinc-binding domains lie at asparagine 39–serine 100, lysine 101–alanine 160, histidine 161–lysine 220, and alanine 223–aspartate 283.

In terms of assembly, interacts with CREM (via the third LIM domain). Interacts (via second LIM domain) with SPAG8.

The protein resides in the nucleus. Functionally, may be involved in the regulation of spermatogenesis. Stimulates CREM transcriptional activity in a phosphorylation-independent manner. The protein is Four and a half LIM domains protein 5 (FHL5) of Bos taurus (Bovine).